The following is a 345-amino-acid chain: MTDKTSLSYKDAGVDIDAGNALVGRIKGVVKKTRRPEVMGGLGGFGALCALPQKYREPVLVSGTDGVGTKLRLAMDLKRHDTIGIDLVAMCVNDLVVQGAEPLFFLDYYATGKLDVDTASAVISGIAEGCLQSGCSLVGGETAEMPGMYHGEDYDVAGFCVGVVEKSEIIDGSKVSDGDVLIALGSSGPHSNGYSLVRKILEVSGCDPQTTELDGKPLADHLLAPTRIYVKSVLELIEKVDVHAIAHLTGGGFWENIPRVLPDNTQAVIDESSWQWPEVFNWLQTAGNVERHEMYRTFNCGVGMIIALPAPEVDKALALLNANGENTWKIGIIKASDSEQRVVIE.

Belongs to the AIR synthase family.

It is found in the cytoplasm. The enzyme catalyses 2-formamido-N(1)-(5-O-phospho-beta-D-ribosyl)acetamidine + ATP = 5-amino-1-(5-phospho-beta-D-ribosyl)imidazole + ADP + phosphate + H(+). It functions in the pathway purine metabolism; IMP biosynthesis via de novo pathway; 5-amino-1-(5-phospho-D-ribosyl)imidazole from N(2)-formyl-N(1)-(5-phospho-D-ribosyl)glycinamide: step 2/2. In Shigella dysenteriae serotype 1 (strain Sd197), this protein is Phosphoribosylformylglycinamidine cyclo-ligase.